The sequence spans 256 residues: Tryptophan synthase alpha chain (256 aa).

Catalysis depends on proton acceptor residues glutamate 45 and aspartate 56.

Belongs to the TrpA family. Tetramer of two alpha and two beta chains.

It catalyses the reaction (1S,2R)-1-C-(indol-3-yl)glycerol 3-phosphate + L-serine = D-glyceraldehyde 3-phosphate + L-tryptophan + H2O. Its pathway is amino-acid biosynthesis; L-tryptophan biosynthesis; L-tryptophan from chorismate: step 5/5. Its function is as follows. The alpha subunit is responsible for the aldol cleavage of indoleglycerol phosphate to indole and glyceraldehyde 3-phosphate. In Christiangramia forsetii (strain DSM 17595 / CGMCC 1.15422 / KT0803) (Gramella forsetii), this protein is Tryptophan synthase alpha chain.